The chain runs to 331 residues: Beta-ketoacyl-[acyl-carrier-protein] synthase III (331 aa).

Residues cysteine 115 and histidine 255 contribute to the active site. The ACP-binding stretch occupies residues 256-260 (QANFR). The active site involves asparagine 285.

This sequence belongs to the thiolase-like superfamily. FabH family. In terms of assembly, homodimer.

It localises to the cytoplasm. It carries out the reaction malonyl-[ACP] + acetyl-CoA + H(+) = 3-oxobutanoyl-[ACP] + CO2 + CoA. The protein operates within lipid metabolism; fatty acid biosynthesis. In terms of biological role, catalyzes the condensation reaction of fatty acid synthesis by the addition to an acyl acceptor of two carbons from malonyl-ACP. Catalyzes the first condensation reaction which initiates fatty acid synthesis and may therefore play a role in governing the total rate of fatty acid production. Possesses both acetoacetyl-ACP synthase and acetyl transacylase activities. Its substrate specificity determines the biosynthesis of branched-chain and/or straight-chain of fatty acids. In Helicobacter pylori (strain ATCC 700392 / 26695) (Campylobacter pylori), this protein is Beta-ketoacyl-[acyl-carrier-protein] synthase III.